Here is a 64-residue protein sequence, read N- to C-terminus: Alpha-conotoxin-like Ac1.1a (64 aa).

An N-terminal signal peptide occupies residues 1–21 (MGMRMMFTLFLLVVLTTTVVS). A propeptide spanning residues 22–47 (YPSDSASDGRDDEAKDERSDMYELKR) is cleaved from the precursor. 2 cysteine pairs are disulfide-bonded: cysteine 51-cysteine 56 and cysteine 52-cysteine 62. Cysteine 62 carries the post-translational modification Cysteine amide.

Belongs to the conotoxin A superfamily. Expressed by the venom duct.

Its subcellular location is the secreted. In terms of biological role, alpha-conotoxins act on postsynaptic membranes, they bind to the nicotinic acetylcholine receptors (nAChR) and thus inhibit them. The sequence is that of Alpha-conotoxin-like Ac1.1a from Conus achatinus (Little frog cone).